A 193-amino-acid polypeptide reads, in one-letter code: Ion-translocating oxidoreductase complex subunit A (193 aa).

The next 6 helical transmembrane spans lie at 5–25, 39–59, 62–82, 102–122, 134–154, and 171–191; these read LLLF…FLGL, IGMG…AWMV, FILL…LVIA, LLGI…VALL, AVYG…FAAI, and SIAL…TGLV.

This sequence belongs to the NqrDE/RnfAE family. As to quaternary structure, the complex is composed of six subunits: RnfA, RnfB, RnfC, RnfD, RnfE and RnfG.

Its subcellular location is the cell inner membrane. Part of a membrane-bound complex that couples electron transfer with translocation of ions across the membrane. This is Ion-translocating oxidoreductase complex subunit A from Yersinia pestis bv. Antiqua (strain Nepal516).